Here is a 132-residue protein sequence, read N- to C-terminus: Small ribosomal subunit protein uS8 (132 aa).

The protein belongs to the universal ribosomal protein uS8 family. Part of the 30S ribosomal subunit. Contacts proteins S5 and S12.

Its function is as follows. One of the primary rRNA binding proteins, it binds directly to 16S rRNA central domain where it helps coordinate assembly of the platform of the 30S subunit. The sequence is that of Small ribosomal subunit protein uS8 from Natranaerobius thermophilus (strain ATCC BAA-1301 / DSM 18059 / JW/NM-WN-LF).